We begin with the raw amino-acid sequence, 373 residues long: CCA-adding enzyme (373 aa).

ATP-binding residues include Gly-8 and Arg-11. CTP contacts are provided by Gly-8 and Arg-11. Asp-21 and Asp-23 together coordinate Mg(2+). Arg-91, Arg-137, and Arg-140 together coordinate ATP. CTP-binding residues include Arg-91, Arg-137, and Arg-140.

Belongs to the tRNA nucleotidyltransferase/poly(A) polymerase family. Bacterial CCA-adding enzyme type 2 subfamily. Requires Mg(2+) as cofactor.

The catalysed reaction is a tRNA precursor + 2 CTP + ATP = a tRNA with a 3' CCA end + 3 diphosphate. It carries out the reaction a tRNA with a 3' CCA end + 2 CTP + ATP = a tRNA with a 3' CCACCA end + 3 diphosphate. Catalyzes the addition and repair of the essential 3'-terminal CCA sequence in tRNAs without using a nucleic acid template. Adds these three nucleotides in the order of C, C, and A to the tRNA nucleotide-73, using CTP and ATP as substrates and producing inorganic pyrophosphate. tRNA 3'-terminal CCA addition is required both for tRNA processing and repair. Also involved in tRNA surveillance by mediating tandem CCA addition to generate a CCACCA at the 3' terminus of unstable tRNAs. While stable tRNAs receive only 3'-terminal CCA, unstable tRNAs are marked with CCACCA and rapidly degraded. The sequence is that of CCA-adding enzyme from Marinobacter nauticus (strain ATCC 700491 / DSM 11845 / VT8) (Marinobacter aquaeolei).